A 102-amino-acid polypeptide reads, in one-letter code: Small ribosomal subunit protein uS10 (102 aa).

The protein belongs to the universal ribosomal protein uS10 family. Part of the 30S ribosomal subunit.

In terms of biological role, involved in the binding of tRNA to the ribosomes. The chain is Small ribosomal subunit protein uS10 from Thermococcus gammatolerans (strain DSM 15229 / JCM 11827 / EJ3).